A 256-amino-acid polypeptide reads, in one-letter code: 5'-nucleotidase SurE (256 aa).

The a divalent metal cation site is built by Asp8, Asp9, Ser40, and Asn92.

It belongs to the SurE nucleotidase family. A divalent metal cation serves as cofactor.

It is found in the cytoplasm. The catalysed reaction is a ribonucleoside 5'-phosphate + H2O = a ribonucleoside + phosphate. Nucleotidase that shows phosphatase activity on nucleoside 5'-monophosphates. The chain is 5'-nucleotidase SurE from Sinorhizobium medicae (strain WSM419) (Ensifer medicae).